The following is a 399-amino-acid chain: MKPYDLPDAQGHFGQYGGVFVAETLIHALDELRAAYDHCRLDPKFIETFNYELKHFVGRPSPVYHAARWSRELGGAQIWFKREDLNHTGAHKVNNCIGQALLARHMGKPRVIAETGAGQHGVATATVAARYGMECVVYMGSEDVRRQASNVYRMKLLGATVVPVESGSRTLKDALNEAMRDWVTNIENTFYIIGTVAGPDPYPRMVRDFQTVIGNECLEQMPQDAGRQPDYVVASVGGGSNAMGIFYPYIPHENVRLIGVEAAGEGLDSGRHAASLAAGQVGVLHGNRTYVMQNADGQVQETHSVSAGLDYPGVGPEHAWLKDSGRAQYVGITDDEALAAFHDCCRIEGIMPALESSHAIAQAVKMAPTLPKDTIILVNLSGRGDKDMHTVAERAGIQF.

At Lys92 the chain carries N6-(pyridoxal phosphate)lysine.

This sequence belongs to the TrpB family. Tetramer of two alpha and two beta chains. Requires pyridoxal 5'-phosphate as cofactor.

It catalyses the reaction (1S,2R)-1-C-(indol-3-yl)glycerol 3-phosphate + L-serine = D-glyceraldehyde 3-phosphate + L-tryptophan + H2O. The protein operates within amino-acid biosynthesis; L-tryptophan biosynthesis; L-tryptophan from chorismate: step 5/5. In terms of biological role, the beta subunit is responsible for the synthesis of L-tryptophan from indole and L-serine. This chain is Tryptophan synthase beta chain, found in Bordetella petrii (strain ATCC BAA-461 / DSM 12804 / CCUG 43448).